Here is a 303-residue protein sequence, read N- to C-terminus: Phytochrome-associated serine/threonine-protein phosphatase 1 (303 aa).

Residues Asp50, His52, Asp78, and Asn110 each contribute to the Zn(2+) site. The Proton donor role is filled by His111. 2 residues coordinate Zn(2+): His160 and His234.

Belongs to the PPP phosphatase family. PP-6 (PP-V) subfamily. Interacts with PHYA and PHYB, mostly when they are phosphorylated and in Pfr forms. Interacts with TAP46. Interacts with PIN1 and PIN2. Interacts with ABI5. Interacts with PIF3 and PIF4. Protein phosphatase 6 (PP6) holoenzyme is a heterotrimeric complex formed by the catalytic subunit FYPP, a SAPS domain-containing subunit (SAL) and a protein phosphatase 2A regulatory subunit A (PP2AA). Zn(2+) is required as a cofactor. As to expression, mostly expressed in flowers. Also detected to a lower extent in stems and leaves. Expressed in roots.

It localises to the cytoplasm. It catalyses the reaction O-phospho-L-seryl-[protein] + H2O = L-seryl-[protein] + phosphate. The enzyme catalyses O-phospho-L-threonyl-[protein] + H2O = L-threonyl-[protein] + phosphate. Its function is as follows. Catalytic subunit of protein phosphatase 6 (PP6). Dephosphorylates phosphorylated phytochromes, with a preference toward Pfr forms. Plays a major role in the photoperiodic control of flowering time in long days by modulating phytochrome signals in flowering time control. Involved in the regulation of polar auxin transport in roots. Dephosphorylates directly the auxin efflux carriers PIN1 and PIN2, thus promoting their proper polar localization in root cell plasma membrane. Acts antagonistically with the protein kinase PID to regulate the reversible phosphorylation of PIN and polar targeting, subsequently impacting polar auxin transport and plant development. Involved in the regulation of abscisic acid (ABA) signaling during seed germination and postgermination seedling growth. Functions as a negative regulator of ABA signaling through direct dephosphorylation and destabilization of ABI5. Acts antagonistically with the protein kinase SRK2E/SNRK2.6 to regulate ABI5 phosphorylation and ABA responses. Involved in the regulation of phosphorylation status in hypocotyl phototropism. Involved in the negative regulation of photomorphogenesis by controlling the stability and transcriptional activity of PIF3 and PIF4 proteins in the dark, via the regulation of their phosphorylation status. The sequence is that of Phytochrome-associated serine/threonine-protein phosphatase 1 from Arabidopsis thaliana (Mouse-ear cress).